We begin with the raw amino-acid sequence, 1657 residues long: Ras GTPase-activating-like protein IQGAP1 (1657 aa).

Ser-2 bears the N-acetylserine mark. Phosphoserine is present on Ser-2. In terms of domain architecture, Calponin-homology (CH) spans 44–159 (LCHLEEAKRW…YCIHALSLYL (116 aa)). Tyr-172 is modified (phosphotyrosine). At Ser-330 the chain carries Phosphoserine. Residues 679 to 712 (GDNNSKWVKHWVKGGYYYYHNLETQEGGWDEPPN) enclose the WW domain. IQ domains follow at residues 745 to 774 (NEGLITRLQARCRGYLVRQEFRSRMNFLKK), 775 to 804 (QIPAITCIQSQWRGYKQKKAYQDRLAYLRS), 805 to 834 (HKDEVVKIQSLARMHQARKRYRDRLQYFRD), and 835 to 864 (HINDIIKIQAFIRANKARDDYKTLINAEDP). The tract at residues 956–1274 (GGLKALSKEK…FFQTACDVPE (319 aa)) is C1. A Ras-GAP domain is found at 1020 to 1269 (YLLLRLFKTA…QKFRRFFQTA (250 aa)). Residues 1276–1657 (QDKFNVDEYS…FLLNKKFYGK (382 aa)) are C2. Residues 1410–1448 (TPATSEQEAEHQRAMQRRAIRDAKTPDKMKKSKSVKEDS) are disordered. Residues 1417-1448 (EAEHQRAMQRRAIRDAKTPDKMKKSKSVKEDS) are compositionally biased toward basic and acidic residues. Ser-1441 is modified (phosphoserine; by PKC). Residue Ser-1443 is modified to Phosphoserine; by PKC/PRKCE.

As to quaternary structure, interacts with CDC42; the interaction is demonstrated with IQGAP1 in GTP-bound and in nucleotide-free state. Interacts with RAC1. Does not interact with RHOA. Interacts with TSG101. Interacts with PAK6. Interacts with TMEM14B; this interaction increases IQGAP1 phosphorylation and induces its nuclear translocation. Interacts with SASH1. Interacts with PJVK. Interacts with SLC26A4; this interaction enhances the chloride-bicarbonate exchange activity of SLC26A4. Interacts with SVEP1. Interacts with ILK; the interaction is required for localization of IQGAP to the cell cortex. In terms of assembly, (Microbial infection) Interacts with ebolavirus vp40. (Microbial infection) Interacts with human cytomegalovirus protein UL5. As to quaternary structure, (Microbial infection) Interacts with C.jejuni invasion antigen D (CiaD). Post-translationally, phosphorylation of Ser-1443 by PKC/PRKCE prevents interaction between C1 and C2, allowing binding of nucleotide-free CDC42. Ser-1443 phosphorylation enhances the ability to promote neurite outgrowth. As to expression, expressed in the placenta, lung, and kidney. A lower level expression is seen in the heart, liver, skeletal muscle and pancreas.

It is found in the cell membrane. Its subcellular location is the nucleus. The protein resides in the cytoplasm. It localises to the cell cortex. The protein localises to the apical cell membrane. It is found in the basolateral cell membrane. Its function is as follows. Plays a crucial role in regulating the dynamics and assembly of the actin cytoskeleton. Recruited to the cell cortex by interaction with ILK which allows it to cooperate with its effector DIAPH1 to locally stabilize microtubules and allow stable insertion of caveolae into the plasma membrane. Binds to activated CDC42 but does not stimulate its GTPase activity. Associates with calmodulin. May promote neurite outgrowth. May play a possible role in cell cycle regulation by contributing to cell cycle progression after DNA replication arrest. The polypeptide is Ras GTPase-activating-like protein IQGAP1 (IQGAP1) (Homo sapiens (Human)).